Reading from the N-terminus, the 529-residue chain is Bifunctional purine biosynthesis protein PurH (529 aa).

Residues 1-148 (MQQRRPVRRA…KNHKDVAIVV (148 aa)) form the MGS-like domain. N6-acetyllysine is present on Lys-287.

It belongs to the PurH family.

It catalyses the reaction (6R)-10-formyltetrahydrofolate + 5-amino-1-(5-phospho-beta-D-ribosyl)imidazole-4-carboxamide = 5-formamido-1-(5-phospho-D-ribosyl)imidazole-4-carboxamide + (6S)-5,6,7,8-tetrahydrofolate. The catalysed reaction is IMP + H2O = 5-formamido-1-(5-phospho-D-ribosyl)imidazole-4-carboxamide. It functions in the pathway purine metabolism; IMP biosynthesis via de novo pathway; 5-formamido-1-(5-phospho-D-ribosyl)imidazole-4-carboxamide from 5-amino-1-(5-phospho-D-ribosyl)imidazole-4-carboxamide (10-formyl THF route): step 1/1. The protein operates within purine metabolism; IMP biosynthesis via de novo pathway; IMP from 5-formamido-1-(5-phospho-D-ribosyl)imidazole-4-carboxamide: step 1/1. The polypeptide is Bifunctional purine biosynthesis protein PurH (Shigella dysenteriae serotype 1 (strain Sd197)).